Here is a 72-residue protein sequence, read N- to C-terminus: Palustrin-2CG1 (72 aa).

The first 22 residues, 1–22, serve as a signal peptide directing secretion; sequence MFTMKKPLLLLFFLGTISLSLC. Positions 23-39 are cleaved as a propeptide — removed in mature form; that stretch reads QEERGADEDDGEMTEEV. An intrachain disulfide couples Cys64 to Cys70.

Expressed by the skin glands.

Its subcellular location is the secreted. In terms of biological role, antimicrobial peptide active against a variety of Gram-positive and some Gram-negative bacterial strains. Has antifungal activity against a slime mold isolate. Has hemolytic activity against human erythrocytes. The polypeptide is Palustrin-2CG1 (Amolops chunganensis (Chungan torrent frog)).